A 605-amino-acid polypeptide reads, in one-letter code: F-box/WD repeat-containing protein 1A (605 aa).

The segment at 128–177 (ASYEKEKELCVKYFEQWSESDQVEFVEHLISQMCHYQHGHINSYLKPMLQ) is homodimerization domain D. One can recognise an F-box domain in the interval 190–228 (DHIAENILSYLDAKSLCAAELVCKEWYRVTSDGMLWKKL). The tract at residues 190 to 228 (DHIAENILSYLDAKSLCAAELVCKEWYRVTSDGMLWKKL) is required for down-regulation of SNAI1. WD repeat units lie at residues 301–338 (ETSKGVYCLQYDDQKIVSGLRDNTIKIWDKNTLECKRI), 341–378 (GHTGSVLCLQYDERVIITGSSDSTVRVWDVNTGEMLNT), 381–418 (HHCEAVLHLRFNNGMMVTCSKDRSIAVWDMASPTDITL), 424–461 (GHRAAVNVVDFDDKYIVSASGDRTIKVWNTSTCEFVRT), 464–503 (GHKRGIACLQYRDRLVVSGSSDNTIRLWDIECGACLRVLE), 505–541 (HEELVRCIRFDNKRIVSGAYDGKIKVWDLVAALDPRA), and 553–590 (EHSGRVFRLQFDEFQIVSSSHDDTILIWDFLNDPAAQA).

Homodimer. Self-associates. Component of the SCF(BTRC) complex formed of CUL1, SKP1, RBX1 and a BTRC dimer. Direct interaction with SKP1 occurs via the F-box domain. Interacts with phosphorylated ubiquitination substrates SMAD3 and SMAD4. Interacts with phosphorylated ubiquitination substrates CTNNB1, NFKBIA, NFKBIB, NFKBIE, NFKB1/nuclear factor NF-kappa-B p105 subunit, ATF4, CDC25A, DLG1, FBXO5 and SNAI1; the interaction requires the phosphorylation of the 2 serine residues in the substrate destruction motif D-S-G-X(2,3,4)-S. Binds UBQLN1. Interacts with CDC34 and UBE2R2. Interacts with FBXW11. Interacts with CUL4A and DDB1. Part of a SCF(BTRC)-like complex lacking CUL1, which is associated with phosphorylated NKBIA and RELA; RELA interacts directly with NFKBIA. Interacts with the phosphorylated form of GLI3. Interacts with CLU. Interacts with PER1 (phosphorylated), PER2 (phosphorylated) and PER3. Interacts with phosphorylated ubiquitination substrate CEP68. Interacts with ZC3H12A; this interaction occurs when ZC3H12A is phosphorylated in a IKBKB/IKKB-dependent manner. Interacts with HSF1; this interaction occurs during mitosis and induces HSF1 ubiquitin-dependent degradation, a process inhibited by CDC20. Interacts with NFE2L1. Interacts with INAVA. Interacts with IL10RA; this interaction leads to IL10RA ubiquitination and subsequent degradation. Interacts with REST. Interacts with KLF4; this interaction leads to KLF4 ubiquitination and subsequent degradation. Interacts with UBR2, as part of a SCF(BTRC) complex; the interaction mediates 'Lys-48'-linked ubiquitination of UBR2 and is regulated by DUSP22 in the T-cell receptor signaling pathway. In terms of assembly, (Microbial infection) Interacts with vaccinia virus A49; this interaction inhibits NF-kappa-B activation. As to quaternary structure, (Microbial infection) Interacts with HIV-1 Vpu. Ubiquitinated. Deubiquitinated by OTUD5, promoting its stability. In terms of tissue distribution, expressed in epididymis (at protein level).

The protein localises to the cytoplasm. It is found in the nucleus. It functions in the pathway protein modification; protein ubiquitination. In terms of biological role, substrate recognition component of a SCF (SKP1-CUL1-F-box protein) E3 ubiquitin-protein ligase complex which mediates the ubiquitination and subsequent proteasomal degradation of target proteins. Recognizes and binds to phosphorylated target proteins. SCF(BTRC) mediates the ubiquitination of CTNNB1 and participates in Wnt signaling. SCF(BTRC) mediates the ubiquitination of phosphorylated NFKB1, ATF4, CDC25A, DLG1, FBXO5, PER1, SMAD3, SMAD4, SNAI1 and probably NFKB2. SCF(BTRC) mediates the ubiquitination of NFKBIA, NFKBIB and NFKBIE; the degradation frees the associated NFKB1 to translocate into the nucleus and to activate transcription. Ubiquitination of NFKBIA occurs at 'Lys-21' and 'Lys-22'. The SCF(FBXW11) complex also regulates NF-kappa-B by mediating ubiquitination of phosphorylated NFKB1: specifically ubiquitinates the p105 form of NFKB1, leading to its degradation. SCF(BTRC) mediates the ubiquitination of CEP68; this is required for centriole separation during mitosis. SCF(BTRC) mediates the ubiquitination and subsequent degradation of nuclear NFE2L1. Has an essential role in the control of the clock-dependent transcription via degradation of phosphorylated PER1 and PER2. May be involved in ubiquitination and subsequent proteasomal degradation through a DBB1-CUL4 E3 ubiquitin-protein ligase. Required for activation of NFKB-mediated transcription by IL1B, MAP3K14, MAP3K1, IKBKB and TNF. Required for proteolytic processing of GLI3. Mediates ubiquitination of REST, thereby leading to its proteasomal degradation. SCF(BTRC) mediates the ubiquitination and subsequent proteasomal degradation of KLF4; thereby negatively regulating cell pluripotency maintenance and embryogenesis. SCF(BTRC) acts as a regulator of mTORC1 signaling pathway by catalyzing ubiquitination and subsequent proteasomal degradation of phosphorylated DEPTOR, TFE3 and MITF. SCF(BTRC) directs 'Lys-48'-linked ubiquitination of UBR2 in the T-cell receptor signaling pathway. The protein is F-box/WD repeat-containing protein 1A (BTRC) of Homo sapiens (Human).